We begin with the raw amino-acid sequence, 504 residues long: MFGVLQKPHVLVLGLGESGLAMARWCGLNGCRVRVADTREAPANLVFLQAELTTAQFMGGQFTENLLDDIGLVAISPGLSPLEPNTRALLEAAQARSIPVWGEIELFAQAIGYLEATSGYAPRVLAITGTNGKTTTTALTGRLIERAGKTVGVAGNISPSALDKLSACIASATLPDVWVLELSSFQLEYTFSLAPHAATVLNVTQDHLDWHGSMEAYAAAKARIFGPAEKGCLQVLNRQDPLTMNMARRGTTLVTFGTDLPETPGSYGVLREGGMPWLVLAEPDTEADAEQKPRRRKKDDVAADAVVPVRHKRLMPADALHIRGMHNATNAMAALALCRAIDLPLNALLHGLREYRGEPHRVEWVATIDEVEYFDDSKGTNVGATVAALSGLDKHVVLIAGGEGKGQDFSPLVAPVAQYARAVVLIGKDAGALREALGATGKPLIDAGSLEEAVEKSASLAEAGDVVLLSPACASLDMFRNYVHRAQVFRGAVEELALSRGIMP.

Residue 129–135 (GTNGKTT) coordinates ATP.

The protein belongs to the MurCDEF family.

The protein resides in the cytoplasm. It carries out the reaction UDP-N-acetyl-alpha-D-muramoyl-L-alanine + D-glutamate + ATP = UDP-N-acetyl-alpha-D-muramoyl-L-alanyl-D-glutamate + ADP + phosphate + H(+). It functions in the pathway cell wall biogenesis; peptidoglycan biosynthesis. Its function is as follows. Cell wall formation. Catalyzes the addition of glutamate to the nucleotide precursor UDP-N-acetylmuramoyl-L-alanine (UMA). The polypeptide is UDP-N-acetylmuramoylalanine--D-glutamate ligase (Cupriavidus metallidurans (strain ATCC 43123 / DSM 2839 / NBRC 102507 / CH34) (Ralstonia metallidurans)).